A 636-amino-acid chain; its full sequence is PTS system beta-glucoside-specific EIIBCA component (636 aa).

Positions 1 to 86 (MKYEQLAKDI…VEIGGFQNQA (86 aa)) constitute a PTS EIIB type-1 domain. The Phosphocysteine intermediate; for EIIB activity role is filled by Cys-26. The next 10 helical transmembrane spans lie at 104–124 (IDIIASIFTPVLGVLAATGMI), 146–166 (LLHAIGDSLFYFFPIFLGYTA), 172–192 (ATPFIGMAIGASLVYPTLVVL), 215–235 (FLGIPVILMSYATSVIPIILA), 258–278 (LVPFFTLLIVVPLTFIVIGPI), 299–319 (IIAGAFLGGFWQVFVIFGLHW), 337–357 (VLAMVFAASFAQIGAVAAVWL), 369–389 (VPAFISGIFGVTEPAIYGVTL), 407–427 (AIIGLFRSQGYIIGGLGIFGI), and 444–464 (IVIAVVVAFVLGFILTYLFGL). A PTS EIIC type-1 domain is found at 105–476 (DIIASIFTPV…GNASDEQTET (372 aa)). The tract at residues 472–492 (EQTETKAHTSTGTGEKEEISS) is disordered. The region spanning 506 to 610 (DEAFSSGALG…AVTTPVIVTN (105 aa)) is the PTS EIIA type-1 domain. Catalysis depends on His-558, which acts as the Tele-phosphohistidine intermediate; for EIIA activity.

The protein localises to the cell membrane. Functionally, the phosphoenolpyruvate-dependent sugar phosphotransferase system (sugar PTS), a major carbohydrate active -transport system, catalyzes the phosphorylation of incoming sugar substrates concomitantly with their translocation across the cell membrane. This system is involved in beta-glucoside transport. The chain is PTS system beta-glucoside-specific EIIBCA component (bglP) from Halalkalibacterium halodurans (strain ATCC BAA-125 / DSM 18197 / FERM 7344 / JCM 9153 / C-125) (Bacillus halodurans).